A 348-amino-acid chain; its full sequence is Phospho-2-dehydro-3-deoxyheptonate aldolase, Trp-sensitive (348 aa).

Belongs to the class-I DAHP synthase family.

It carries out the reaction D-erythrose 4-phosphate + phosphoenolpyruvate + H2O = 7-phospho-2-dehydro-3-deoxy-D-arabino-heptonate + phosphate. It functions in the pathway metabolic intermediate biosynthesis; chorismate biosynthesis; chorismate from D-erythrose 4-phosphate and phosphoenolpyruvate: step 1/7. Functionally, stereospecific condensation of phosphoenolpyruvate (PEP) and D-erythrose-4-phosphate (E4P) giving rise to 3-deoxy-D-arabino-heptulosonate-7-phosphate (DAHP). The chain is Phospho-2-dehydro-3-deoxyheptonate aldolase, Trp-sensitive (aroH) from Escherichia coli O157:H7.